The primary structure comprises 495 residues: uncharacterized protein (495 aa).

FAD contacts are provided by serine 16, glutamate 36, tryptophan 45, aspartate 56, tyrosine 62, and valine 105.

The protein belongs to the FAD-binding monooxygenase family. It depends on FAD as a cofactor.

This is an uncharacterized protein from Mycobacterium tuberculosis (strain CDC 1551 / Oshkosh).